We begin with the raw amino-acid sequence, 123 residues long: Small ribosomal subunit protein uS11 (123 aa).

It belongs to the universal ribosomal protein uS11 family. As to quaternary structure, part of the 30S ribosomal subunit. Interacts with proteins S7 and S18. Binds to IF-3.

Functionally, located on the platform of the 30S subunit, it bridges several disparate RNA helices of the 16S rRNA. Forms part of the Shine-Dalgarno cleft in the 70S ribosome. This is Small ribosomal subunit protein uS11 from Coxiella burnetii (strain CbuK_Q154) (Coxiella burnetii (strain Q154)).